The following is a 238-amino-acid chain: tRNA (guanine-N(7)-)-methyltransferase (238 aa).

S-adenosyl-L-methionine-binding residues include Glu68, Glu93, Asp120, and Asp143. The active site involves Asp143. Residues Lys147, Asp179, and 216–219 (TKFE) each bind substrate.

This sequence belongs to the class I-like SAM-binding methyltransferase superfamily. TrmB family.

It catalyses the reaction guanosine(46) in tRNA + S-adenosyl-L-methionine = N(7)-methylguanosine(46) in tRNA + S-adenosyl-L-homocysteine. The protein operates within tRNA modification; N(7)-methylguanine-tRNA biosynthesis. Catalyzes the formation of N(7)-methylguanine at position 46 (m7G46) in tRNA. The sequence is that of tRNA (guanine-N(7)-)-methyltransferase from Shewanella baltica (strain OS195).